An 81-amino-acid chain; its full sequence is MDIKNLLTACTIFYITTLATADIPTPPPTGHVTRENILIRGIINVVIGVHLENLPRLDVMVTITQNVNAAHLIHIPQSQLF.

This is an uncharacterized protein from Homo sapiens (Human).